A 678-amino-acid polypeptide reads, in one-letter code: MKIPEDIKKRIEKLREEIEYHNYRYYVLADPIISDEEYDRLMQELIELEKKYPELVTPDSPSQRVGEKVLDEFRSVEHSEPMLSLDNTYDEAQIREFDKRVRKLLEKDTIEYVTELKIDGVSVALRYENGRFVLGLSRGDGTRGDDITENLKKVRSIPLILREPVTVEVRGEIYMPTEEFERLNEERKKVDGPLFANPRNATAGTLRQLDTSVIRNRRLDSFIYYVLSPERYGLQTQWDALKWLKKIGFKVNPYSQLCQNIDQVIDYWKQWIEKKSELSYWVDGVVVKVNHFNFQSILGSTSRSPRWAIAFKFPAQRAKTRVLNIIVQVGRTGILTPVAELEPIQLAGTVVKRVSLHNFDYIEEKDIRIGDQVYVEKSGGIIPQVVSVIADERNGSEKKIEIPSKCPVCSGKVGKIDSEDVALRCLNPHCPAKLKRALETFVSRGALNIKGLGEKLIDRLVDSGLVKDIADIFYLTPFELSQLGSGIGQKMIANLLAQIEQAKKTPLHKILTGLGIPLVGEKTARILTQKFRSIKRLLSSSVDELTQIEGIGIEIAKNIREYFDNEKTRQIIGKLEKAGLNLEEKEAVVQSKILSNLTFAVTGTLKNFTRDQIKQLVQSLGGQVTDSVSKSTDYVIVGDNPGSKLTKARNLGVKLLTEDEFLQFVKIDIKNLRQQKLF.

Residues 35–39, 84–85, and Glu115 each bind NAD(+); these read DEEYD and SL. Lys117 functions as the N6-AMP-lysine intermediate in the catalytic mechanism. NAD(+)-binding residues include Arg138, Glu172, Lys288, and Lys312. Residues Cys406, Cys409, Cys425, and Cys430 each contribute to the Zn(2+) site. The 90-residue stretch at 589–678 folds into the BRCT domain; it reads VQSKILSNLT…IKNLRQQKLF (90 aa).

It belongs to the NAD-dependent DNA ligase family. LigA subfamily. It depends on Mg(2+) as a cofactor. Mn(2+) is required as a cofactor.

It catalyses the reaction NAD(+) + (deoxyribonucleotide)n-3'-hydroxyl + 5'-phospho-(deoxyribonucleotide)m = (deoxyribonucleotide)n+m + AMP + beta-nicotinamide D-nucleotide.. Its function is as follows. DNA ligase that catalyzes the formation of phosphodiester linkages between 5'-phosphoryl and 3'-hydroxyl groups in double-stranded DNA using NAD as a coenzyme and as the energy source for the reaction. It is essential for DNA replication and repair of damaged DNA. The protein is DNA ligase of Pseudothermotoga lettingae (strain ATCC BAA-301 / DSM 14385 / NBRC 107922 / TMO) (Thermotoga lettingae).